Consider the following 463-residue polypeptide: Cysteine--tRNA ligase (463 aa).

Cys27 lines the Zn(2+) pocket. A 'HIGH' region motif is present at residues 29–39; the sequence is PTVYGLIHIGN. Residues Cys207, His232, and Glu236 each contribute to the Zn(2+) site. Residues 264–268 carry the 'KMSKS' region motif; that stretch reads KMSKS. Residue Lys267 participates in ATP binding.

The protein belongs to the class-I aminoacyl-tRNA synthetase family. In terms of assembly, monomer. The cofactor is Zn(2+).

The protein resides in the cytoplasm. It carries out the reaction tRNA(Cys) + L-cysteine + ATP = L-cysteinyl-tRNA(Cys) + AMP + diphosphate. The polypeptide is Cysteine--tRNA ligase (Pseudothermotoga lettingae (strain ATCC BAA-301 / DSM 14385 / NBRC 107922 / TMO) (Thermotoga lettingae)).